Reading from the N-terminus, the 970-residue chain is Glycine dehydrogenase (decarboxylating) (970 aa).

Lys723 carries the post-translational modification N6-(pyridoxal phosphate)lysine.

It belongs to the GcvP family. The glycine cleavage system is composed of four proteins: P, T, L and H. Requires pyridoxal 5'-phosphate as cofactor.

It catalyses the reaction N(6)-[(R)-lipoyl]-L-lysyl-[glycine-cleavage complex H protein] + glycine + H(+) = N(6)-[(R)-S(8)-aminomethyldihydrolipoyl]-L-lysyl-[glycine-cleavage complex H protein] + CO2. The glycine cleavage system catalyzes the degradation of glycine. The P protein binds the alpha-amino group of glycine through its pyridoxal phosphate cofactor; CO(2) is released and the remaining methylamine moiety is then transferred to the lipoamide cofactor of the H protein. The chain is Glycine dehydrogenase (decarboxylating) from Burkholderia pseudomallei (strain 1106a).